Here is a 325-residue protein sequence, read N- to C-terminus: Biotin synthase (325 aa).

The region spanning 52–281 (YQKDDVVLCS…AKPLLICGGR (230 aa)) is the Radical SAM core domain. Cys-70, Cys-74, and Cys-77 together coordinate [4Fe-4S] cluster. Residues Ser-114, Cys-146, and Cys-206 each contribute to the [2Fe-2S] cluster site.

Belongs to the radical SAM superfamily. Biotin synthase family. As to quaternary structure, homodimer. The cofactor is [4Fe-4S] cluster. [2Fe-2S] cluster is required as a cofactor.

It carries out the reaction (4R,5S)-dethiobiotin + (sulfur carrier)-SH + 2 reduced [2Fe-2S]-[ferredoxin] + 2 S-adenosyl-L-methionine = (sulfur carrier)-H + biotin + 2 5'-deoxyadenosine + 2 L-methionine + 2 oxidized [2Fe-2S]-[ferredoxin]. Its pathway is cofactor biosynthesis; biotin biosynthesis; biotin from 7,8-diaminononanoate: step 2/2. Functionally, catalyzes the conversion of dethiobiotin (DTB) to biotin by the insertion of a sulfur atom into dethiobiotin via a radical-based mechanism. This Syntrophus aciditrophicus (strain SB) protein is Biotin synthase.